The following is a 242-amino-acid chain: MKTFHGPTCGTAVSLCLLLFLTSALEEGEITSKVKFPPSSSPSFPRLVMVGTLPDLQEITLCYWFKVNCLKGTLHMFSYATAKKDNELLTLLDEQGDFLFNVHGAPQLKVQCPNKIHIGKWHHVCHTWSSWEGEATIAVDGFHCKGNATGIAVGRTLSQGGLVVLGQDQDSVGGKFDATQSLEGELSELNLWNTVLNHEQIKYLSKCAHPSERHIYGNIIQWDKTQFKAYDGVVLSPNEICA.

The first 24 residues, 1–24 (MKTFHGPTCGTAVSLCLLLFLTSA), serve as a signal peptide directing secretion. One can recognise a Pentraxin (PTX) domain in the interval 30-241 (ITSKVKFPPS…GVVLSPNEIC (212 aa)). Phosphocholine contacts are provided by Thr60 and Tyr63. 2 disulfides stabilise this stretch: Cys62–Cys125 and Cys112–Cys144. Residues Asp85 and Asn86 each contribute to the Ca(2+) site. Asn147 carries N-linked (GlcNAc...) asparagine glycosylation. Gln169, Asp170, and Gln180 together coordinate Ca(2+). Cys207 and Cys241 are disulfide-bonded.

It belongs to the pentraxin family. As to quaternary structure, homopentamer. Pentraxin (or pentaxin) have a discoid arrangement of 5 non-covalently bound subunits. The cofactor is Ca(2+).

The protein resides in the secreted. Functionally, might serve the role of immunoglobulins. This chain is C-reactive protein 3.3, found in Limulus polyphemus (Atlantic horseshoe crab).